The sequence spans 137 residues: Small ribosomal subunit protein uS12 (137 aa).

A disordered region spans residues 1–57 (MPTINQLVRKPRKSKVEKSKSPALNVGYNSRKKVQTNVSSPQKRGVATRVGTMTPKK). D102 is subject to 3-methylthioaspartic acid.

It belongs to the universal ribosomal protein uS12 family. In terms of assembly, part of the 30S ribosomal subunit. Contacts proteins S8 and S17. May interact with IF1 in the 30S initiation complex.

With S4 and S5 plays an important role in translational accuracy. In terms of biological role, interacts with and stabilizes bases of the 16S rRNA that are involved in tRNA selection in the A site and with the mRNA backbone. Located at the interface of the 30S and 50S subunits, it traverses the body of the 30S subunit contacting proteins on the other side and probably holding the rRNA structure together. The combined cluster of proteins S8, S12 and S17 appears to hold together the shoulder and platform of the 30S subunit. The protein is Small ribosomal subunit protein uS12 of Streptococcus suis (strain 98HAH33).